We begin with the raw amino-acid sequence, 331 residues long: MGNCLKHFKQQLPSIAPKPLIIPPIFSARKRESESLQIRGLKKATKKFRQDRVVECEDYSVRKFYKGYIDETTFAPSRAGTGIAVSVMECDSSRSLQDWMAVVRSLGQLSHQNLVNFLGYCCEDNKPFFLVFEYSHKGSLDSHIFGKEEEALPWEIRVKIAIGTAQGLAFLHSIKNSPLNRELRMHNIMLDEQYNAKLFYLEPTKRSLVDEGLKRGRFTYLSPEWGSLGILDMTTDVYIFGMILLELLMGSKDRKKIKEEQGLVDYWTSSFLPDNYKIEEIIDPRLGSDYSANAATQMGTLINRCTAHNTKKRPLMQQVLDGLNHIAEIKD.

The N-myristoyl glycine moiety is linked to residue Gly2. Cys4 carries the S-palmitoyl cysteine lipid modification. In terms of domain architecture, Protein kinase spans 58 to 328; it reads DYSVRKFYKG…VLDGLNHIAE (271 aa).

It belongs to the protein kinase superfamily. Ser/Thr protein kinase family. As to expression, restricted to stigma in flowers.

It localises to the cell membrane. The protein localises to the nucleus. Its function is as follows. Collaboratively with BKN2/SZE2, involved in compatible pollen-stigma interactions. The protein is Inactive serine/threonine-protein kinase BKN1 of Arabidopsis thaliana (Mouse-ear cress).